The primary structure comprises 181 residues: ATP synthase subunit delta (181 aa).

Belongs to the ATPase delta chain family. As to quaternary structure, F-type ATPases have 2 components, F(1) - the catalytic core - and F(0) - the membrane proton channel. F(1) has five subunits: alpha(3), beta(3), gamma(1), delta(1), epsilon(1). F(0) has three main subunits: a(1), b(2) and c(10-14). The alpha and beta chains form an alternating ring which encloses part of the gamma chain. F(1) is attached to F(0) by a central stalk formed by the gamma and epsilon chains, while a peripheral stalk is formed by the delta and b chains.

It localises to the cell membrane. In terms of biological role, f(1)F(0) ATP synthase produces ATP from ADP in the presence of a proton or sodium gradient. F-type ATPases consist of two structural domains, F(1) containing the extramembraneous catalytic core and F(0) containing the membrane proton channel, linked together by a central stalk and a peripheral stalk. During catalysis, ATP synthesis in the catalytic domain of F(1) is coupled via a rotary mechanism of the central stalk subunits to proton translocation. This protein is part of the stalk that links CF(0) to CF(1). It either transmits conformational changes from CF(0) to CF(1) or is implicated in proton conduction. The polypeptide is ATP synthase subunit delta (Bacillus velezensis (strain DSM 23117 / BGSC 10A6 / LMG 26770 / FZB42) (Bacillus amyloliquefaciens subsp. plantarum)).